A 509-amino-acid chain; its full sequence is GRAS family protein RAD1 (509 aa).

The region spanning 125 to 508 is the GRAS domain; the sequence is EDGCADGMRL…KPIVAASCWK (384 aa). The interval 132–198 is leucine repeat I (LRI); that stretch reads MRLVQLLIAC…IQPIGSGAGV (67 aa). The interval 217–286 is VHIID; it reads YRLVYETCPH…SGHGRVRRLR (70 aa). The VHIID signature appears at 248–252; it reads VHVVD. A leucine repeat II (LRII) region spans residues 299-331; the sequence is AIGDELSDYANNLGINLEFSVVQKNLENLQPED. Positions 340–431 are PFYRE; the sequence is LVVNSILQLH…QFYFAEEIKN (92 aa). Positions 434–508 are SAW; the sequence is SCEGPLRMER…KPIVAASCWK (75 aa).

The protein belongs to the GRAS family. Interacts with RAM1 and NSP2. Expressed in roots under low phosphate (Pi) conditions.

It localises to the nucleus. Functionally, transcription factor acting as a regulator of arbuscular mycorrhiza (AM)-related genes (e.g. PT4, STR and RAM2). Required for the morphogenesis of arbuscules upon symbiosis with AM fungi (e.g. Rhizophagus irregularis). Also involved in restricting mycorrhizal colonization of the root meristem. The polypeptide is GRAS family protein RAD1 (Lotus japonicus (Lotus corniculatus var. japonicus)).